A 336-amino-acid polypeptide reads, in one-letter code: Holliday junction branch migration complex subunit RuvB (336 aa).

The interval 4 to 184 (ADRLISASGG…FGIVQRLEFY (181 aa)) is large ATPase domain (RuvB-L). ATP is bound by residues I23, R24, G65, K68, T69, T70, 131-133 (EDY), R174, Y184, and R221. T69 lines the Mg(2+) pocket. The small ATPAse domain (RuvB-S) stretch occupies residues 185-255 (NVKDLTDIVA…IAARAMDMLD (71 aa)). The head domain (RuvB-H) stretch occupies residues 258–336 (NEGFDFMDRK…HFGLQRPDEG (79 aa)). R313 and R318 together coordinate DNA.

This sequence belongs to the RuvB family. As to quaternary structure, homohexamer. Forms an RuvA(8)-RuvB(12)-Holliday junction (HJ) complex. HJ DNA is sandwiched between 2 RuvA tetramers; dsDNA enters through RuvA and exits via RuvB. An RuvB hexamer assembles on each DNA strand where it exits the tetramer. Each RuvB hexamer is contacted by two RuvA subunits (via domain III) on 2 adjacent RuvB subunits; this complex drives branch migration. In the full resolvosome a probable DNA-RuvA(4)-RuvB(12)-RuvC(2) complex forms which resolves the HJ.

The protein localises to the cytoplasm. The enzyme catalyses ATP + H2O = ADP + phosphate + H(+). Functionally, the RuvA-RuvB-RuvC complex processes Holliday junction (HJ) DNA during genetic recombination and DNA repair, while the RuvA-RuvB complex plays an important role in the rescue of blocked DNA replication forks via replication fork reversal (RFR). RuvA specifically binds to HJ cruciform DNA, conferring on it an open structure. The RuvB hexamer acts as an ATP-dependent pump, pulling dsDNA into and through the RuvAB complex. RuvB forms 2 homohexamers on either side of HJ DNA bound by 1 or 2 RuvA tetramers; 4 subunits per hexamer contact DNA at a time. Coordinated motions by a converter formed by DNA-disengaged RuvB subunits stimulates ATP hydrolysis and nucleotide exchange. Immobilization of the converter enables RuvB to convert the ATP-contained energy into a lever motion, pulling 2 nucleotides of DNA out of the RuvA tetramer per ATP hydrolyzed, thus driving DNA branch migration. The RuvB motors rotate together with the DNA substrate, which together with the progressing nucleotide cycle form the mechanistic basis for DNA recombination by continuous HJ branch migration. Branch migration allows RuvC to scan DNA until it finds its consensus sequence, where it cleaves and resolves cruciform DNA. This Aeromonas hydrophila subsp. hydrophila (strain ATCC 7966 / DSM 30187 / BCRC 13018 / CCUG 14551 / JCM 1027 / KCTC 2358 / NCIMB 9240 / NCTC 8049) protein is Holliday junction branch migration complex subunit RuvB.